We begin with the raw amino-acid sequence, 511 residues long: Histidine ammonia-lyase (511 aa).

The 5-imidazolinone (Ala-Gly) cross-link spans 142 to 144; that stretch reads ASG. At serine 143 the chain carries 2,3-didehydroalanine (Ser).

Belongs to the PAL/histidase family. Contains an active site 4-methylidene-imidazol-5-one (MIO), which is formed autocatalytically by cyclization and dehydration of residues Ala-Ser-Gly.

The protein localises to the cytoplasm. It catalyses the reaction L-histidine = trans-urocanate + NH4(+). The protein operates within amino-acid degradation; L-histidine degradation into L-glutamate; N-formimidoyl-L-glutamate from L-histidine: step 1/3. This is Histidine ammonia-lyase from Rhizobium rhizogenes (Agrobacterium rhizogenes).